The following is a 114-amino-acid chain: Transcription factor S1 (114 aa).

An N-ZR region spans residues 1 to 43 (MIVVKFCPKCNSMMVPKKSNGKNVYRCTKCGYEKEVPETTIVV). 6 residues coordinate Zn(2+): Cys-7, Cys-10, Cys-27, Cys-30, Cys-75, and Cys-78. Positions 63 to 114 (MPSGAQKIKGVLCPSCKNDEAYFWILQTRRADEPPTRFYKCTKCGKVWREYE) are C-ZR. The TFIIS-type zinc-finger motif lies at 71–111 (KGVLCPSCKNDEAYFWILQTRRADEPPTRFYKCTKCGKVWR). Catalysis depends on residues Asp-94 and Glu-95. Zn(2+) is bound by residues Cys-103 and Cys-106.

This sequence belongs to the archaeal RpoM/eukaryotic RPA12/RPB9/RPC11 RNA polymerase family. As to quaternary structure, interacts with RNA polymerase; probably competes with TFS4 for the same binding site. Zn(2+) is required as a cofactor.

Functionally, induces RNA cleavage activity in the RNA polymerase. Induces rapid cleavage of a stalled transcription elongation complex with a 2-nucleotide reduction at the 3' end of the nascent RNA. Truncated RNA is able to resume elongation. During transcription elongation it enhances processivity. Involved in transcriptional proofreading and fidelity. Misincorporation of nucleotides during elongation of transcription leads to arrested elongation complexes which are rescued by TFS-promoted removal of a dinucleotide from the 3'-end. TFS1 is able to induce a cleavage resynthesis cycle in stalled elongation complexes (resulting from the next missing nucleotide or a reduced incorporation rate of a wrong nucleotide) preventing misincorporation and enabling proofreading in a post-incorporation manner. Pausing of elongation complexes is the main determinant of TFS-induced RNA cleavage. The sequence is that of Transcription factor S1 from Saccharolobus solfataricus (strain ATCC 35092 / DSM 1617 / JCM 11322 / P2) (Sulfolobus solfataricus).